The following is a 436-amino-acid chain: MLRTTFRKGFNLKCFSKDWNQTRQYSNYTKMTIFDTNVKTIQKNNTVTNVDDPKHYDYLMNEVADRLADRILDIKDIKCGNVLDFGSRNGALFKYIQEKGAKIDKYYMVESSKELLYRDDNNVSQENEDDNNNNKVKPTKILVNSLEDKIEGIEDQSLDLIISNLSLHWVNDLPGVFGGLKRLLKPNGVFLASLFGEDTLMELKDSLYLAEIEREGGFSPHVSPFTKISDIGNILSKNRYTLPTVDTEKITINYDNMFVLMRDLQNMGENNAILKRRNYTSKDTFLAASAIYKHLYGNEDNNSIPATFQIIYLIGWAPHESQQKPLQRGSAKKHFSEISGTSSFGYKFDNDSSIPSILTNENNSVTLSQQQQQQGIEPQQSNDDSINEPFPKTDDFVIKRLDYHGNFHFEKQQQQQQQQDQNKESSDEINKNKDDK.

The N-terminal 25 residues, 1–25 (MLRTTFRKGFNLKCFSKDWNQTRQY), are a transit peptide targeting the mitochondrion. The tract at residues 365 to 436 (VTLSQQQQQQ…DEINKNKDDK (72 aa)) is disordered. Residues 369–380 (QQQQQQGIEPQQ) show a composition bias toward low complexity. Composition is skewed to basic and acidic residues over residues 391-411 (PKTD…HFEK) and 421-436 (QNKE…KDDK).

Belongs to the methyltransferase superfamily.

The protein resides in the mitochondrion. Functionally, involved in the assembly of mitochondrial NADH:ubiquinone oxidoreductase complex (complex I, MT-ND1) at early stages. Probably acts as an arginine hydroxylase. May also have methyltransferase activity. This is Arginine-hydroxylase NDUFAF5, mitochondrial from Dictyostelium discoideum (Social amoeba).